The sequence spans 1259 residues: Clustered mitochondria protein homolog (1259 aa).

Positions 1–27 (MSQTNGNMEHSKETPQSQEVEQLTNGN) are enriched in polar residues. Positions 1–38 (MSQTNGNMEHSKETPQSQEVEQLTNGNHPEEQQEEEEN) are disordered. In terms of domain architecture, Clu spans 324–568 (DITRSQESYL…RVTPLDVMWQ (245 aa)). Composition is skewed to basic and acidic residues over residues 612 to 628 (AEAE…SKEQ) and 634 to 647 (TEEK…QERV). Disordered stretches follow at residues 612 to 647 (AEAE…QERV) and 881 to 908 (VVNG…PSRA). TPR repeat units lie at residues 982-1015 (AKLY…TERT), 1024-1057 (ILAY…WKII), and 1066-1099 (ITTM…CESL). Disordered regions lie at residues 1192 to 1215 (TKVQ…ANAS) and 1229 to 1259 (EGGD…KSSA).

It belongs to the CLU family. As to quaternary structure, may associate with the eukaryotic translation initiation factor 3 (eIF-3) complex.

It is found in the cytoplasm. Its function is as follows. mRNA-binding protein involved in proper cytoplasmic distribution of mitochondria. The chain is Clustered mitochondria protein homolog from Aspergillus clavatus (strain ATCC 1007 / CBS 513.65 / DSM 816 / NCTC 3887 / NRRL 1 / QM 1276 / 107).